We begin with the raw amino-acid sequence, 111 residues long: Probable 4-amino-4-deoxy-L-arabinose-phosphoundecaprenol flippase subunit ArnE (111 aa).

The Cytoplasmic portion of the chain corresponds to 1–35 (MIWLTLVFASLLSVAGQLCQKQATCFATVNKRRKH). The chain crosses the membrane as a helical span at residues 36-56 (IVLWLGLALACLGLAMVLWLL). In terms of domain architecture, EamA spans 40–109 (LGLALACLGL…IIGGIVILGS (70 aa)). The Periplasmic portion of the chain corresponds to 57–60 (VLQN). Residues 61-81 (VPVGIAYPMLSLNFVWVTLAA) traverse the membrane as a helical segment. At 82–87 (VKLWHE) the chain is on the cytoplasmic side. A helical transmembrane segment spans residues 88–108 (PVSLRHWCGVAFIIGGIVILG). Residues 109–111 (STV) are Periplasmic-facing.

It belongs to the ArnE family. Heterodimer of ArnE and ArnF.

It is found in the cell inner membrane. The protein operates within bacterial outer membrane biogenesis; lipopolysaccharide biosynthesis. Functionally, translocates 4-amino-4-deoxy-L-arabinose-phosphoundecaprenol (alpha-L-Ara4N-phosphoundecaprenol) from the cytoplasmic to the periplasmic side of the inner membrane. The chain is Probable 4-amino-4-deoxy-L-arabinose-phosphoundecaprenol flippase subunit ArnE from Escherichia coli O6:H1 (strain CFT073 / ATCC 700928 / UPEC).